We begin with the raw amino-acid sequence, 88 residues long: Small ribosomal subunit protein bS18 (88 aa).

Positions 1 to 22 (MSTKNAKPKKEAQRRPSRKAKV) are disordered.

It belongs to the bacterial ribosomal protein bS18 family. Part of the 30S ribosomal subunit. Forms a tight heterodimer with protein bS6.

Functionally, binds as a heterodimer with protein bS6 to the central domain of the 16S rRNA, where it helps stabilize the platform of the 30S subunit. The chain is Small ribosomal subunit protein bS18 (rpsR) from Thermus thermophilus (strain ATCC BAA-163 / DSM 7039 / HB27).